Here is a 248-residue protein sequence, read N- to C-terminus: Triosephosphate isomerase (248 aa).

9–11 (NWK) serves as a coordination point for substrate. The active-site Electrophile is the H94. The active-site Proton acceptor is E166. Substrate-binding positions include G172, S212, and 233-234 (GG).

This sequence belongs to the triosephosphate isomerase family. Homodimer.

The protein resides in the cytoplasm. It carries out the reaction D-glyceraldehyde 3-phosphate = dihydroxyacetone phosphate. It participates in carbohydrate biosynthesis; gluconeogenesis. The protein operates within carbohydrate degradation; glycolysis; D-glyceraldehyde 3-phosphate from glycerone phosphate: step 1/1. Its function is as follows. Involved in the gluconeogenesis. Catalyzes stereospecifically the conversion of dihydroxyacetone phosphate (DHAP) to D-glyceraldehyde-3-phosphate (G3P). The polypeptide is Triosephosphate isomerase (Clostridium botulinum (strain Eklund 17B / Type B)).